Here is a 96-residue protein sequence, read N- to C-terminus: Co-chaperonin GroES (96 aa).

This sequence belongs to the GroES chaperonin family. As to quaternary structure, heptamer of 7 subunits arranged in a ring. Interacts with the chaperonin GroEL.

It is found in the cytoplasm. Together with the chaperonin GroEL, plays an essential role in assisting protein folding. The GroEL-GroES system forms a nano-cage that allows encapsulation of the non-native substrate proteins and provides a physical environment optimized to promote and accelerate protein folding. GroES binds to the apical surface of the GroEL ring, thereby capping the opening of the GroEL channel. The protein is Co-chaperonin GroES of Haemophilus influenzae (strain 86-028NP).